Reading from the N-terminus, the 413-residue chain is Intracellular hyaluronan-binding protein 4 (413 aa).

Phosphoserine occurs at positions 7 and 36. Residues Asp-40–Ala-64 are a coiled coil. Positions Leu-42–Asp-206 are disordered. Low complexity predominate over residues Ala-62–Arg-82. An Omega-N-methylarginine modification is found at Arg-70. The residue at position 74 (Ser-74) is a Phosphoserine. Residues Gly-87–Ser-97 show a composition bias toward basic and acidic residues. At Ser-108 the chain carries Phosphoserine. The span at Met-139 to Leu-182 shows a compositional bias: basic and acidic residues. A compositionally biased stretch (gly residues) spans Gly-184–Gly-201. Glycyl lysine isopeptide (Lys-Gly) (interchain with G-Cter in SUMO1); alternate cross-links involve residues Lys-213 and Lys-276. Residues Lys-213 and Lys-276 each participate in a glycyl lysine isopeptide (Lys-Gly) (interchain with G-Cter in SUMO2); alternate cross-link. The disordered stretch occupies residues Val-227 to Ser-320. Over residues Asp-294–Glu-315 the composition is skewed to basic and acidic residues. Lys-336 participates in a covalent cross-link: Glycyl lysine isopeptide (Lys-Gly) (interchain with G-Cter in SUMO1); alternate. A Glycyl lysine isopeptide (Lys-Gly) (interchain with G-Cter in SUMO2); alternate cross-link involves residue Lys-336. A phosphothreonine; by PKC mark is found at Thr-354 and Thr-375. The tract at residues Asn-360–Ser-413 is disordered. A compositionally biased stretch (acidic residues) spans Asp-404–Ser-413.

The protein belongs to the SERBP1-HABP4 family. As to quaternary structure, associates with ribosomes; promoting ribosome stabilization. Interacts with EEF2/eEF2; promoting ribosome stabilization. Interacts with FMR1. Interacts with FXR1 and FXR2. Interacts with CHD3 (via C-terminus). Interacts (via C-terminus) with RACK1. Interacts with p53/TP53. Interacts (via N-terminus) with SRSF9; this interaction is direct. Interacts with SYNCRIP; this interaction is direct. Interacts with MEF2C (via N-terminus); this interaction decreases DNA-binding activity of MEF2C in myocardial cells in response to mechanical stress. Interacts with PRMT1 (via N-terminus). Interacts with SPIN1. Post-translationally, methylated. Methylation is decreased by phorbol 12-myristate 13-acetate (PMA)-activated PKC, in vitro. Phosphorylated by phorbol 12-myristate 13-acetate (PMA)-activated PKC isoforms at Thr-354 and Thr-375. Highly expressed in brain, heart, and kidney, and moderately expressed in skeletal muscle. Also expressed in a variety of tumor cell lines and in activated but not resting leukocytes.

It is found in the nucleus. Its subcellular location is the cytoplasm. The protein localises to the stress granule. It localises to the sarcoplasm. The protein resides in the nuclear body. It is found in the nucleolus. Its subcellular location is the nucleus speckle. The protein localises to the cajal body. It localises to the gem. Its function is as follows. Ribosome-binding protein that promotes ribosome hibernation, a process during which ribosomes are stabilized in an inactive state and preserved from proteasomal degradation. Acts via its association with EEF2/eEF2 factor at the A-site of the ribosome, promoting ribosome stabilization in an inactive state compatible with storage. Plays a key role in ribosome hibernation in the mature oocyte by promoting ribosome stabilization. Ribosomes, which are produced in large quantities during oogenesis, are stored and translationally repressed in the oocyte and early embryo. Also binds RNA, regulating transcription and pre-mRNA splicing. Binds (via C-terminus) to poly(U) RNA. Seems to play a role in PML-nuclear bodies formation. Negatively regulates DNA-binding activity of the transcription factor MEF2C in myocardial cells in response to mechanical stress. This is Intracellular hyaluronan-binding protein 4 from Homo sapiens (Human).